Consider the following 237-residue polypeptide: N-alpha-acetyltransferase 40 (237 aa).

A lipid anchor (N-myristoyl glycine) is attached at Gly2. In terms of domain architecture, N-acetyltransferase spans 63–216 (SGLEPATVDW…EDCSYEILSR (154 aa)). Substrate contacts are provided by residues Tyr85, 127 to 129 (DVE), and Tyr138. Residues 140–142 (VQL) and 148–153 (RKGLGK) contribute to the acetyl-CoA site. Thr174 serves as a coordination point for substrate. Asn179 provides a ligand contact to acetyl-CoA. Substrate-binding residues include Ser197 and Tyr211.

This sequence belongs to the acetyltransferase family. NAA40 subfamily. As to expression, widely expressed; with the highest expression level in liver and the lowest expression in brain (at protein level).

It is found in the cytoplasm. The protein localises to the nucleus. The enzyme catalyses N-terminal L-seryl-[histone H4] + acetyl-CoA = N-terminal N(alpha)-acetyl-L-seryl-[histone H4] + CoA + H(+). The catalysed reaction is N-terminal L-seryl-[histone H2A] + acetyl-CoA = N-terminal N(alpha)-acetyl-L-seryl-[histone H2A] + CoA + H(+). Its function is as follows. N-alpha-acetyltransferase that specifically mediates the acetylation of the N-terminal residues of histones H4 and H2A. In contrast to other N-alpha-acetyltransferase, has a very specific selectivity for histones H4 and H2A N-terminus and specifically recognizes the 'Ser-Gly-Arg-Gly sequence'. Acts as a negative regulator of apoptosis. May play a role in hepatic lipid metabolism. The chain is N-alpha-acetyltransferase 40 from Homo sapiens (Human).